Reading from the N-terminus, the 407-residue chain is Probable NADPH dehydrogenase (407 aa).

2 residues coordinate FMN: T49 and Q124. Residue 201 to 204 (HGAH) coordinates substrate. Catalysis depends on Y206, which acts as the Proton donor. The FMN site is built by R254 and R357.

It belongs to the NADH:flavin oxidoreductase/NADH oxidase family. FMN serves as cofactor.

It catalyses the reaction A + NADPH + H(+) = AH2 + NADP(+). Its function is as follows. Oxidoreductase that binds mammalian estrogens with high affinity. The sequence is that of Probable NADPH dehydrogenase from Candida albicans (Yeast).